We begin with the raw amino-acid sequence, 256 residues long: Ribonuclease HII (256 aa).

One can recognise an RNase H type-2 domain in the interval 72–256; sequence ALICGIDEVG…TFEPIKSLVN (185 aa). Residues D78, E79, and D170 each contribute to the a divalent metal cation site.

The protein belongs to the RNase HII family. Mn(2+) serves as cofactor. Mg(2+) is required as a cofactor.

It is found in the cytoplasm. The enzyme catalyses Endonucleolytic cleavage to 5'-phosphomonoester.. Functionally, endonuclease that specifically degrades the RNA of RNA-DNA hybrids. This Staphylococcus saprophyticus subsp. saprophyticus (strain ATCC 15305 / DSM 20229 / NCIMB 8711 / NCTC 7292 / S-41) protein is Ribonuclease HII.